Here is a 505-residue protein sequence, read N- to C-terminus: MTEQKYIVALDQGTTSSRAVVLDHDANIVSVSQREFTQIYPQAGWVEHDPMEIYATQSSTLVEALGKKGIRSDQVAAIGITNQRETTIVWNKETGKPVYNAIVWQCRRTADICEDLKARGLESYIRENTGLVLDPYFSGTKVKWILDNVEGAREDAEAGKLLFGTVDTWLVWKMTQGRVHVTDYTNASRTMLFNINDLCWDSKLLEEMGIPASMMPEVKRSSEIYGQTNIGGKGGTRIPISGIAGDQQAALYGQMCVEAGQAKNTYGTGCFLLMNTGQEKVTSRNGLLTTLACGPKGEPAYALEGAVFMGGASIQWLRDELKLISDAHDSEYFATKVDTSNGVYVVPAFTGLGAPYWDAYARGTIVGLTRGVNSNHIIRATLEGIAYQTRDVLDAMQADSGIKLSALRVDGGAVANNFLMQFQSDVLDTEVHRPKVTEVTALGAAYLAGLAVGYWNSIDELQGKAEIDRSFLPHQDEEKRSRRYKGWKRAVKCAQTWSELRDLED.

Residue Thr-14 coordinates ADP. The ATP site is built by Thr-14, Thr-15, and Ser-16. Residue Thr-14 participates in sn-glycerol 3-phosphate binding. Residue Arg-18 coordinates ADP. Residues Arg-84, Glu-85, Tyr-136, and Asp-246 each coordinate sn-glycerol 3-phosphate. The glycerol site is built by Arg-84, Glu-85, Tyr-136, Asp-246, and Gln-247. The ADP site is built by Thr-268 and Gly-311. Residues Thr-268, Gly-311, Gln-315, and Gly-412 each coordinate ATP. ADP-binding residues include Gly-412 and Asn-416.

It belongs to the FGGY kinase family.

The enzyme catalyses glycerol + ATP = sn-glycerol 3-phosphate + ADP + H(+). It participates in polyol metabolism; glycerol degradation via glycerol kinase pathway; sn-glycerol 3-phosphate from glycerol: step 1/1. Its activity is regulated as follows. Inhibited by fructose 1,6-bisphosphate (FBP). Functionally, key enzyme in the regulation of glycerol uptake and metabolism. Catalyzes the phosphorylation of glycerol to yield sn-glycerol 3-phosphate. The polypeptide is Glycerol kinase (Vibrio vulnificus (strain CMCP6)).